The primary structure comprises 190 residues: MIGKLSGTLDDKNPPQVIVDCHGVGYEVLVPMSTFYNLPELGARVSLLTHFVVREDAQILYGFATSQERAAFRELIKISGVGPRTALSVLSGMSVAELAQAVTLQEGGRLIKVPGIGKKTAERLLLELKGKLGPDIGVAASVANDSQADILQALLALGYSDKEAAAALKALPSDVGVSEGIRLALRALGK.

The domain I stretch occupies residues 1–64 (MIGKLSGTLD…EDAQILYGFA (64 aa)). The segment at 65-137 (TSQERAAFRE…LKGKLGPDIG (73 aa)) is domain II. The tract at residues 137 to 141 (GVAAS) is flexible linker. Residues 142–190 (VANDSQADILQALLALGYSDKEAAAALKALPSDVGVSEGIRLALRALGK) form a domain III region.

Belongs to the RuvA family. Homotetramer. Forms an RuvA(8)-RuvB(12)-Holliday junction (HJ) complex. HJ DNA is sandwiched between 2 RuvA tetramers; dsDNA enters through RuvA and exits via RuvB. An RuvB hexamer assembles on each DNA strand where it exits the tetramer. Each RuvB hexamer is contacted by two RuvA subunits (via domain III) on 2 adjacent RuvB subunits; this complex drives branch migration. In the full resolvosome a probable DNA-RuvA(4)-RuvB(12)-RuvC(2) complex forms which resolves the HJ.

Its subcellular location is the cytoplasm. The RuvA-RuvB-RuvC complex processes Holliday junction (HJ) DNA during genetic recombination and DNA repair, while the RuvA-RuvB complex plays an important role in the rescue of blocked DNA replication forks via replication fork reversal (RFR). RuvA specifically binds to HJ cruciform DNA, conferring on it an open structure. The RuvB hexamer acts as an ATP-dependent pump, pulling dsDNA into and through the RuvAB complex. HJ branch migration allows RuvC to scan DNA until it finds its consensus sequence, where it cleaves and resolves the cruciform DNA. In Albidiferax ferrireducens (strain ATCC BAA-621 / DSM 15236 / T118) (Rhodoferax ferrireducens), this protein is Holliday junction branch migration complex subunit RuvA.